Reading from the N-terminus, the 207-residue chain is Ribosomal RNA large subunit methyltransferase E (207 aa).

Residues glycine 60, tryptophan 62, aspartate 80, aspartate 96, and aspartate 121 each coordinate S-adenosyl-L-methionine. Lysine 161 acts as the Proton acceptor in catalysis.

It belongs to the class I-like SAM-binding methyltransferase superfamily. RNA methyltransferase RlmE family.

Its subcellular location is the cytoplasm. It carries out the reaction uridine(2552) in 23S rRNA + S-adenosyl-L-methionine = 2'-O-methyluridine(2552) in 23S rRNA + S-adenosyl-L-homocysteine + H(+). Specifically methylates the uridine in position 2552 of 23S rRNA at the 2'-O position of the ribose in the fully assembled 50S ribosomal subunit. This Pseudomonas paraeruginosa (strain DSM 24068 / PA7) (Pseudomonas aeruginosa (strain PA7)) protein is Ribosomal RNA large subunit methyltransferase E.